Here is a 652-residue protein sequence, read N- to C-terminus: Spermatogenesis-associated protein 13 (652 aa).

Positions 1 to 24 (MTSASPEDQNAPVGCPKGARRRRP) are disordered. A Phosphoserine modification is found at S78. Residues 81–108 (IGLDRVGRRRQMRASNVSSDGGTEPSAL) are disordered. The interval 98 to 150 (SSDGGTEPSALVDDNGSEEDFSYEDLCQASPRYLQPGGEQLAINELISDGNVV) is ABR (APC-binding region) domain. S114 is subject to Phosphoserine. One can recognise an SH3 domain in the interval 147 to 206 (GNVVCAEALWDHVTMDDQELGFKAGDVIQVLEASNKDWWWGRSEDKEAWFPASFVRLRVN). The disordered stretch occupies residues 209-235 (ELSENSSSTPSEEQDEEASQSRHRHCE). Positions 240-424 (MRTNVIREIM…KNVACLINER (185 aa)) constitute a DH domain. The region spanning 455–561 (ELIHSGELTK…WLQACADERR (107 aa)) is the PH domain. Residues 561–652 (RRVQEDKEMG…TFNRLTPFRK (92 aa)) are C-terminal tail.

As to quaternary structure, interacts (via ABR and SH3 domain) with APC. The binding of APC enhances its GEF activity by relieving it from an autoinhibitory conformation, in which the ABR and SH3 domains are associated with the C-terminal tail. Interacts (via C-terminal tail) with PPP1R9B (via C-terminus). Interacts with RAC1. Expressed at high levels in the placenta, spleen and kidney, at moderate levels in lung, small intestine, liver, brain and heart, and at low levels in skeletal muscle. Expression is aberrantly enhanced in most colorectal tumors.

The protein resides in the cytoplasm. It is found in the cell projection. It localises to the filopodium. The protein localises to the lamellipodium. Its subcellular location is the ruffle membrane. The protein resides in the podosome. Its activity is regulated as follows. Both the ABR and the SH3 domains contribute to maintaining the protein in an inhibited conformation by associating with the C-terminal tail. Binding of these domains to the C-terminal tail inhibits the activity of the protein by blocking a region that is required for its GEF activity. Acts as a guanine nucleotide exchange factor (GEF) for RHOA, RAC1 and CDC42 GTPases. Regulates cell migration and adhesion assembly and disassembly through a RAC1, PI3K, RHOA and AKT1-dependent mechanism. Increases both RAC1 and CDC42 activity, but decreases the amount of active RHOA. Required for MMP9 up-regulation via the JNK signaling pathway in colorectal tumor cells. Involved in tumor angiogenesis and may play a role in intestinal adenoma formation and tumor progression. The chain is Spermatogenesis-associated protein 13 from Homo sapiens (Human).